Consider the following 3381-residue polypeptide: Versican core protein (3381 aa).

Residues 1 to 20 (MLINIKSILWMCSTLIAAHA) form the signal peptide. In terms of domain architecture, Ig-like V-type spans 21–147 (LQKVNMEKSP…EDTQDTVSLT (127 aa)). 5 cysteine pairs are disulfide-bonded: C44–C131, C173–C244, C197–C218, C271–C346, and C295–C316. The N-linked (GlcNAc...) asparagine glycan is linked to N57. Link domains are found at residues 151 to 246 (VVFH…YCYV) and 252 to 348 (DVFH…YCFK). 2 N-linked (GlcNAc...) asparagine glycosylation sites follow: N331 and N352. The tract at residues 349 to 1336 (PKQNISEATT…IIEVRENKTG (988 aa)) is GAG-alpha (glucosaminoglycan attachment domain). Over residues 417-427 (PLTSTHRSATE) the composition is skewed to polar residues. 2 disordered regions span residues 417 to 437 (PLTS…SMKK) and 603 to 623 (ESVS…MDHR). A glycan (O-linked (Xyl...) (chondroitin sulfate) serine) is linked at S660. The tract at residues 816 to 866 (DNTTSKPLGSTEHVGSPKLPPALITTTGVSGKDKEMPSLTEDGRDEFTRIP) is disordered. Residue N817 is glycosylated (N-linked (GlcNAc...) asparagine). Positions 846 to 863 (GKDKEMPSLTEDGRDEFT) are enriched in basic and acidic residues. N-linked (GlcNAc...) asparagine glycosylation is found at N965 and N1017. The span at 1043–1052 (EDFLWKEQTP) shows a compositional bias: basic and acidic residues. Disordered regions lie at residues 1043-1081 (EDFL…SDGS) and 1218-1244 (FSSA…PDEE). The N-linked (GlcNAc...) asparagine glycan is linked to N1333. Residues 1337–3074 (RMSDFSVSGH…VEGTAVYLPG (1738 aa)) are GAG-beta. Residues 1338–1362 (MSDFSVSGHPIDSESKEDEPCSEET) form a disordered region. The segment covering 1352-1362 (SKEDEPCSEET) has biased composition (acidic residues). N1393 carries an N-linked (GlcNAc...) asparagine glycan. Residues 1417–1428 (KDPEAAEARRGQ) are compositionally biased toward basic and acidic residues. Disordered stretches follow at residues 1417–1446 (KDPE…ESDS), 1455–1474 (GLPT…SLEI), and 1484–1512 (TAEP…GPDS). N-linked (GlcNAc...) asparagine glycosylation is found at N1437 and N1463. O-linked (Xyl...) (chondroitin sulfate) serine glycans are attached at residues S1539 and S1621. N1653 is a glycosylation site (N-linked (GlcNAc...) asparagine). The segment at 1708–1785 (PPLEETTRKE…ERETTSSTVV (78 aa)) is disordered. Positions 1712-1721 (ETTRKEEEKG) are enriched in basic and acidic residues. Over residues 1726-1738 (ASTVEVHSPTQRL) the composition is skewed to polar residues. Residues 1743 to 1761 (SPSELESSSETPPDDSAAA) show a composition bias toward low complexity. Residues 1764 to 1784 (KSFTSQMTPTQSERETTSSTV) show a composition bias toward polar residues. O-linked (Xyl...) (chondroitin sulfate) serine glycans are attached at residues S1928 and S1952. Polar residues predominate over residues 1964 to 1976 (PSVTPTSDLSNHT). 2 disordered regions span residues 1964–1986 (PSVT…GSTL) and 2041–2126 (EGAI…QSSV). 4 N-linked (GlcNAc...) asparagine glycosylation sites follow: N1974, N2045, N2074, and N2103. Positions 2065–2075 (STEEGEVKENH) are enriched in basic and acidic residues. The residue at position 2109 (S2109) is a Phosphoserine. 2 O-linked (Xyl...) (chondroitin sulfate) serine glycosylation sites follow: S2240 and S2247. 3 N-linked (GlcNAc...) asparagine glycosylation sites follow: N2263, N2290, and N2356. 3 disordered regions span residues 2338 to 2388 (EGPF…AETK), 2490 to 2512 (EQRE…EKAT), and 2594 to 2615 (TDLD…TQVQ). Polar residues-rich tracts occupy residues 2345-2357 (LTFS…PQNQ) and 2367-2383 (TSRP…ENSV). 2 positions are modified to phosphoserine: S2607 and S2608. Phosphothreonine is present on T2612. N-linked (GlcNAc...) asparagine glycosylation is found at N2623 and N2641. O-linked (Xyl...) (chondroitin sulfate) serine glycosylation is found at S2714, S2715, and S2759. A disordered region spans residues 2819 to 2893 (PPLSIHLGSG…EPSEDESKPK (75 aa)). Over residues 2840–2851 (ALPSTDASTPPV) the composition is skewed to polar residues. 2 N-linked (GlcNAc...) asparagine glycosylation sites follow: N2919 and N3052. Positions 3074 to 3110 (GPDRCKMNPCLNGGTCYPTETSYVCTCVPGYSGDRCE) constitute an EGF-like 1 domain. Cystine bridges form between C3078/C3089, C3083/C3098, C3100/C3109, C3116/C3127, C3121/C3136, C3138/C3147, C3154/C3165, C3182/C3274, C3250/C3266, C3281/C3324, and C3310/C3337. In terms of domain architecture, EGF-like 2; calcium-binding spans 3112–3148 (DFDECHSNPCRNGATCIDGFNTFRCLCLPSYVGALCE). The C-type lectin domain maps to 3161-3275 (FQGQCYKYFA…CNYHLTYTCK (115 aa)). The Sushi domain maps to 3279–3339 (VACGQPPVVE…WAMPKITCLN (61 aa)). N-linked (GlcNAc...) asparagine glycosylation is found at N3354 and N3364. Residues 3355-3365 (SSSAKDNSINT) show a composition bias toward polar residues. The tract at residues 3355–3381 (SSSAKDNSINTSKHDHRWSRRWQESRR) is disordered.

It belongs to the aggrecan/versican proteoglycan family. In terms of assembly, interacts with FBLN1. Post-translationally, phosphorylated by FAM20C in the extracellular medium. Proteolytically cleaved by ADAMTS5 and ADAMTS15 in the pericellular matrix surrounding myoblasts, facilitating myoblast contact and fusion which is required for skeletal muscle development and regeneration. In terms of tissue distribution, cerebral white matter. Isoform V0 and isoform V1 are expressed in the central nervous system, and in a number of mesenchymal and epithelial tissues; the major isoform V2 is restricted to the central nervous system.

The protein localises to the secreted. It is found in the extracellular space. The protein resides in the extracellular matrix. Its subcellular location is the cell projection. It localises to the cilium. The protein localises to the photoreceptor outer segment. It is found in the interphotoreceptor matrix. Its function is as follows. May play a role in intercellular signaling and in connecting cells with the extracellular matrix. May take part in the regulation of cell motility, growth and differentiation. Binds hyaluronic acid. The sequence is that of Versican core protein (VCAN) from Bos taurus (Bovine).